Consider the following 334-residue polypeptide: Porphobilinogen deaminase (334 aa).

Cysteine 255 bears the S-(dipyrrolylmethanemethyl)cysteine mark.

This sequence belongs to the HMBS family. As to quaternary structure, monomer. Dipyrromethane is required as a cofactor.

It catalyses the reaction 4 porphobilinogen + H2O = hydroxymethylbilane + 4 NH4(+). Its pathway is porphyrin-containing compound metabolism; protoporphyrin-IX biosynthesis; coproporphyrinogen-III from 5-aminolevulinate: step 2/4. Tetrapolymerization of the monopyrrole PBG into the hydroxymethylbilane pre-uroporphyrinogen in several discrete steps. This Burkholderia orbicola (strain MC0-3) protein is Porphobilinogen deaminase.